The following is a 220-amino-acid chain: N-(5'-phosphoribosyl)anthranilate isomerase (220 aa).

It belongs to the TrpF family.

It carries out the reaction N-(5-phospho-beta-D-ribosyl)anthranilate = 1-(2-carboxyphenylamino)-1-deoxy-D-ribulose 5-phosphate. Its pathway is amino-acid biosynthesis; L-tryptophan biosynthesis; L-tryptophan from chorismate: step 3/5. The polypeptide is N-(5'-phosphoribosyl)anthranilate isomerase (Bordetella petrii (strain ATCC BAA-461 / DSM 12804 / CCUG 43448)).